The chain runs to 330 residues: Pseudouridine-5'-phosphate glycosidase (330 aa).

Glu50 (proton donor) is an active-site residue. Residues Lys112 and Val132 each contribute to the substrate site. Asp164 lines the Mn(2+) pocket. A substrate-binding site is contributed by 166-168 (SSD). The active-site Nucleophile is Lys185.

Belongs to the pseudouridine-5'-phosphate glycosidase family. Homotrimer. Requires Mn(2+) as cofactor.

The protein resides in the peroxisome. The catalysed reaction is D-ribose 5-phosphate + uracil = psi-UMP + H2O. Its function is as follows. Catalyzes the reversible cleavage of pseudouridine 5'-phosphate (PsiMP) to ribose 5-phosphate and uracil. Functions biologically in the cleavage direction, as part of a pseudouridine degradation pathway. Acts together with the pseudouridine kinase PUKI in the peroxisome to prevent toxic pseudouridine monophosphate accumulation. Can catalyze the formation of pseudouridine 5'-phosphate (reverse reaction) in vitro, with a catalytic efficiency 4 times lower than the hydrolysis reaction. In Arabidopsis thaliana (Mouse-ear cress), this protein is Pseudouridine-5'-phosphate glycosidase.